A 190-amino-acid chain; its full sequence is GATA transcription factor 17 (190 aa).

Over residues methionine 1 to serine 14 the composition is skewed to basic and acidic residues. Disordered stretches follow at residues methionine 1 to arginine 42 and arginine 77 to asparagine 101. The GATA-type zinc finger occupies glycine 38–arginine 92.

Belongs to the type IV zinc-finger family. Class B subfamily.

Its subcellular location is the nucleus. Its function is as follows. Transcriptional regulator that specifically binds 5'-GATA-3' or 5'-GAT-3' motifs within gene promoters. This is GATA transcription factor 17 (GATA17) from Arabidopsis thaliana (Mouse-ear cress).